The chain runs to 333 residues: Probable 4-hydroxyproline 2-epimerase (333 aa).

The active-site Proton acceptor is cysteine 90. Substrate contacts are provided by residues 91 to 92 (GH), histidine 223, and aspartate 249. The active-site Proton donor is cysteine 253. Residue 254–255 (GT) coordinates substrate.

Belongs to the proline racemase family.

It carries out the reaction trans-4-hydroxy-L-proline = cis-4-hydroxy-D-proline. Its function is as follows. Likely catalyzes the epimerization of trans-4-hydroxy-L-proline (t4LHyp) to cis-4-hydroxy-D-proline (c4DHyp). May be involved in the degradation pathway that converts t4LHyp to alpha-ketoglutarate, which would allow R.meliloti to grow on t4LHyp as a sole carbon source. In Rhizobium meliloti (strain 1021) (Ensifer meliloti), this protein is Probable 4-hydroxyproline 2-epimerase.